Consider the following 260-residue polypeptide: uncharacterized protein (260 aa).

The signal sequence occupies residues 1–22; it reads MGNIKSFALYISILLLIVVVAG. Residue Cys-23 is the site of N-palmitoyl cysteine attachment. Residue Cys-23 is the site of S-diacylglycerol cysteine attachment.

It belongs to the staphylococcal tandem lipoprotein family.

It localises to the cell membrane. This is an uncharacterized protein from Staphylococcus aureus (strain MRSA252).